Here is a 332-residue protein sequence, read N- to C-terminus: Mitochondrial glycine transporter (332 aa).

Solcar repeat units follow at residues 11 to 94, 121 to 205, and 235 to 319; these read SSSY…LRQN, LSNL…LKKR, and TSAS…LIRR. The next 6 helical transmembrane spans lie at 17–42, 69–95, 127–152, 180–203, 239–265, and 294–312; these read FGAGLGSGILSAVLLQPADLLKTRVQ, GTVPSALRTGFGSAIYFTSLNALRQNV, LTTGAVARAGAGFILMPMTIIKVRYE, GFGATAIRDAPYAGLYVLFYEELK, INFGSGVLAAGLATAITNPFDAIKTRI, and GLGLRMGRKAVSSALAWTI.

The protein belongs to the mitochondrial carrier (TC 2.A.29) family. SLC25A38 subfamily.

It is found in the mitochondrion inner membrane. It catalyses the reaction glycine(in) = glycine(out). Its function is as follows. Mitochondrial glycine transporter that imports glycine into the mitochondrial matrix. Plays an important role in providing glycine for the first enzymatic step in heme biosynthesis, the condensation of glycine with succinyl-CoA to produce 5-aminolevulinate (ALA) in the mitochondrial matrix. This chain is Mitochondrial glycine transporter, found in Botryotinia fuckeliana (strain B05.10) (Noble rot fungus).